Consider the following 525-residue polypeptide: GMP synthase [glutamine-hydrolyzing] (525 aa).

Positions 9–207 (RILILDFGSQ…VRDICQCEAL (199 aa)) constitute a Glutamine amidotransferase type-1 domain. Catalysis depends on Cys-86, which acts as the Nucleophile. Residues His-181 and Glu-183 contribute to the active site. The region spanning 208 to 400 (WTPAKIIDDA…LGLPYDMLYR (193 aa)) is the GMPS ATP-PPase domain. 235–241 (SGGVDSS) contributes to the ATP binding site.

As to quaternary structure, homodimer.

It catalyses the reaction XMP + L-glutamine + ATP + H2O = GMP + L-glutamate + AMP + diphosphate + 2 H(+). It participates in purine metabolism; GMP biosynthesis; GMP from XMP (L-Gln route): step 1/1. Its function is as follows. Catalyzes the synthesis of GMP from XMP. The polypeptide is GMP synthase [glutamine-hydrolyzing] (Klebsiella pneumoniae subsp. pneumoniae (strain ATCC 700721 / MGH 78578)).